The following is a 463-amino-acid chain: Interferon-inducible GTPase 5 (463 aa).

Residues 53-235 (IRLEVGVTGE…PTLVSTWEHD (183 aa)) form the IRG-type G domain. Residues 62–69 (ESGAGKSS), 87–91 (TGVME), 169–171 (KVD), and 216–218 (SNL) each bind GTP. A phosphoserine mark is found at Ser-247 and Ser-304. Residues 404–437 (LEDDEPQPEVSLEVASDNGVEKGGSGEGGGEEAP) form a disordered region.

Belongs to the TRAFAC class dynamin-like GTPase superfamily. IRG family. As to expression, abundantly expressed in semen (at protein level).

The protein localises to the cell projection. The protein resides in the cilium. Its subcellular location is the flagellum. It localises to the lipid droplet. It catalyses the reaction GTP + H2O = GDP + phosphate + H(+). Its function is as follows. Required for sperm motility and therefore male fertility, via positive regulation of spermatozoa fibrous sheath formation. The protein is Interferon-inducible GTPase 5 of Homo sapiens (Human).